The sequence spans 236 residues: 2,3,4,5-tetrahydropyridine-2,6-dicarboxylate N-acetyltransferase (236 aa).

The protein belongs to the transferase hexapeptide repeat family. DapH subfamily.

The enzyme catalyses (S)-2,3,4,5-tetrahydrodipicolinate + acetyl-CoA + H2O = L-2-acetamido-6-oxoheptanedioate + CoA. Its pathway is amino-acid biosynthesis; L-lysine biosynthesis via DAP pathway; LL-2,6-diaminopimelate from (S)-tetrahydrodipicolinate (acetylase route): step 1/3. In terms of biological role, catalyzes the transfer of an acetyl group from acetyl-CoA to tetrahydrodipicolinate. This Geobacillus sp. (strain WCH70) protein is 2,3,4,5-tetrahydropyridine-2,6-dicarboxylate N-acetyltransferase.